The sequence spans 609 residues: Membrane protein insertase YidC (609 aa).

Helical transmembrane passes span 8-28 (LILA…LFPP), 381-401 (MGWS…PLAL), 451-471 (LPIL…FVTI), 509-529 (SLTA…SMWL), and 545-565 (IFAW…SGLV).

The protein belongs to the OXA1/ALB3/YidC family. Type 1 subfamily. As to quaternary structure, interacts with the Sec translocase complex via SecD. Specifically interacts with transmembrane segments of nascent integral membrane proteins during membrane integration.

The protein resides in the cell inner membrane. In terms of biological role, required for the insertion and/or proper folding and/or complex formation of integral membrane proteins into the membrane. Involved in integration of membrane proteins that insert both dependently and independently of the Sec translocase complex, as well as at least some lipoproteins. Aids folding of multispanning membrane proteins. This chain is Membrane protein insertase YidC, found in Ruegeria pomeroyi (strain ATCC 700808 / DSM 15171 / DSS-3) (Silicibacter pomeroyi).